The primary structure comprises 361 residues: Peptide chain release factor 1 (361 aa).

Gln-236 carries the post-translational modification N5-methylglutamine. A compositionally biased stretch (basic and acidic residues) spans 285–309; the sequence is NAKDSARAADRKAQVGSGDRSERIR. The tract at residues 285 to 312 is disordered; the sequence is NAKDSARAADRKAQVGSGDRSERIRTYN.

The protein belongs to the prokaryotic/mitochondrial release factor family. Methylated by PrmC. Methylation increases the termination efficiency of RF1.

It localises to the cytoplasm. Its function is as follows. Peptide chain release factor 1 directs the termination of translation in response to the peptide chain termination codons UAG and UAA. The polypeptide is Peptide chain release factor 1 (Methylobacterium radiotolerans (strain ATCC 27329 / DSM 1819 / JCM 2831 / NBRC 15690 / NCIMB 10815 / 0-1)).